Reading from the N-terminus, the 494-residue chain is Guanosine-5'-triphosphate,3'-diphosphate pyrophosphatase (494 aa).

Belongs to the GppA/Ppx family. GppA subfamily.

It catalyses the reaction guanosine 3'-diphosphate 5'-triphosphate + H2O = guanosine 3',5'-bis(diphosphate) + phosphate + H(+). The protein operates within purine metabolism; ppGpp biosynthesis; ppGpp from GTP: step 2/2. Catalyzes the conversion of pppGpp to ppGpp. Guanosine pentaphosphate (pppGpp) is a cytoplasmic signaling molecule which together with ppGpp controls the 'stringent response', an adaptive process that allows bacteria to respond to amino acid starvation, resulting in the coordinated regulation of numerous cellular activities. The protein is Guanosine-5'-triphosphate,3'-diphosphate pyrophosphatase of Shigella flexneri serotype 5b (strain 8401).